The sequence spans 365 residues: Ferrochelatase (365 aa).

Residues His-211 and Glu-292 each contribute to the Fe cation site.

This sequence belongs to the ferrochelatase family.

The protein resides in the cytoplasm. The catalysed reaction is heme b + 2 H(+) = protoporphyrin IX + Fe(2+). The protein operates within porphyrin-containing compound metabolism; protoheme biosynthesis; protoheme from protoporphyrin-IX: step 1/1. In terms of biological role, catalyzes the ferrous insertion into protoporphyrin IX. The polypeptide is Ferrochelatase (Aromatoleum aromaticum (strain DSM 19018 / LMG 30748 / EbN1) (Azoarcus sp. (strain EbN1))).